The sequence spans 158 residues: SsrA-binding protein (158 aa).

It belongs to the SmpB family.

The protein resides in the cytoplasm. In terms of biological role, required for rescue of stalled ribosomes mediated by trans-translation. Binds to transfer-messenger RNA (tmRNA), required for stable association of tmRNA with ribosomes. tmRNA and SmpB together mimic tRNA shape, replacing the anticodon stem-loop with SmpB. tmRNA is encoded by the ssrA gene; the 2 termini fold to resemble tRNA(Ala) and it encodes a 'tag peptide', a short internal open reading frame. During trans-translation Ala-aminoacylated tmRNA acts like a tRNA, entering the A-site of stalled ribosomes, displacing the stalled mRNA. The ribosome then switches to translate the ORF on the tmRNA; the nascent peptide is terminated with the 'tag peptide' encoded by the tmRNA and targeted for degradation. The ribosome is freed to recommence translation, which seems to be the essential function of trans-translation. In Bifidobacterium longum (strain DJO10A), this protein is SsrA-binding protein.